A 362-amino-acid polypeptide reads, in one-letter code: Adenosine deaminase (362 aa).

Residues histidine 19 and histidine 21 each coordinate Zn(2+). 3 residues coordinate substrate: histidine 21, aspartate 23, and glycine 181. Histidine 208 is a Zn(2+) binding site. Glutamate 211 serves as the catalytic Proton donor. Aspartate 300 serves as a coordination point for Zn(2+).

Belongs to the metallo-dependent hydrolases superfamily. Adenosine and AMP deaminases family. Adenosine deaminase subfamily. Zn(2+) serves as cofactor.

It catalyses the reaction adenosine + H2O + H(+) = inosine + NH4(+). The enzyme catalyses 2'-deoxyadenosine + H2O + H(+) = 2'-deoxyinosine + NH4(+). Its function is as follows. Catalyzes the hydrolytic deamination of adenosine and 2-deoxyadenosine. This Mycobacteroides abscessus (strain ATCC 19977 / DSM 44196 / CCUG 20993 / CIP 104536 / JCM 13569 / NCTC 13031 / TMC 1543 / L948) (Mycobacterium abscessus) protein is Adenosine deaminase.